Reading from the N-terminus, the 213-residue chain is Protein Flattop (213 aa).

The segment at 127–213 (VDQPAEQSKI…HNSRPASQEK (87 aa)) is disordered. A compositionally biased stretch (polar residues) spans 151–213 (QHIQDQSRPA…HNSRPASQEK (63 aa)).

Belongs to the Flattop family.

The protein localises to the cytoplasm. Its subcellular location is the cytoskeleton. It localises to the cilium basal body. It is found in the cell projection. The protein resides in the cilium. The protein localises to the apical cell membrane. Its subcellular location is the cilium axoneme. Microtubule inner protein (MIP) part of the dynein-decorated doublet microtubules (DMTs) in cilia axoneme. Acts as a regulator of cilium basal body docking and positioning in mono- and multiciliated cells. Regulates basal body docking and cilia formation in multiciliated lung cells. Regulates kinocilium positioning and stereocilia bundle morphogenesis in the inner ear. This is Protein Flattop from Danio rerio (Zebrafish).